A 525-amino-acid chain; its full sequence is GMP synthase [glutamine-hydrolyzing] (525 aa).

The region spanning 9-207 (RILILDFGSQ…VLDICGCEAL (199 aa)) is the Glutamine amidotransferase type-1 domain. The active-site Nucleophile is the cysteine 86. Catalysis depends on residues histidine 181 and glutamate 183. A GMPS ATP-PPase domain is found at 208–400 (WTPSKIAEDA…LGLPYDMVYR (193 aa)). Residue 235-241 (SGGVDSS) participates in ATP binding.

As to quaternary structure, homodimer.

It catalyses the reaction XMP + L-glutamine + ATP + H2O = GMP + L-glutamate + AMP + diphosphate + 2 H(+). It participates in purine metabolism; GMP biosynthesis; GMP from XMP (L-Gln route): step 1/1. In terms of biological role, catalyzes the synthesis of GMP from XMP. This Pseudomonas fluorescens (strain Pf0-1) protein is GMP synthase [glutamine-hydrolyzing].